We begin with the raw amino-acid sequence, 501 residues long: MSALRRKFGDDYQVVTTSSSGSGLQPQGPGQGPQQQLVPKKKRQRFVDKNGRCNVQHGNLGSETSRYLSDLFTTLVDLKWRWNLFIFILTYTVAWLFMASMWWVIAYTRGDLNKAHVGNYTPCVANVYNFPSAFLFFIETEATIGYGYRYITDKCPEGIILFLFQSILGSIVDAFLIGCMFIKMSQPKKRAETLMFSEHAVISMRDGKLTLMFRVGNLRNSHMVSAQIRCKLLKSRQTPEGEFLPLDQLELDVGFSTGADQLFLVSPLTICHVIDAKSPFYDLSQRSMQSEQFEIVVILEGIVETTGMTCQARTSYTEDEVLWGHRFFPVISLEEGFFKVDYSQFHATFEVPTPPYSVKEQEEMLLMSSPLIAPAITNSKERHNSVECLDGLDDISTKLPSKLQKITGREDFPKKLLRMSSTTSEKAYSLGDLPMKLQRISSVPGNSEEKLVSKTTKMLSDPMSQSVADLPPKLQKMAGGATRMEGNLPAKLRKMNSDRFT.

The segment at 1-40 is disordered; it reads MSALRRKFGDDYQVVTTSSSGSGLQPQGPGQGPQQQLVPK. Residues 1-80 lie on the Cytoplasmic side of the membrane; the sequence is MSALRRKFGD…LFTTLVDLKW (80 aa). Residues 18-37 show a composition bias toward low complexity; it reads SSSGSGLQPQGPGQGPQQQL. A helical transmembrane segment spans residues 81 to 105; the sequence is RWNLFIFILTYTVAWLFMASMWWVI. Topologically, residues 106 to 129 are extracellular; it reads AYTRGDLNKAHVGNYTPCVANVYN. The N-linked (GlcNAc...) asparagine glycan is linked to Asn119. Positions 130-141 form an intramembrane region, helical; Pore-forming; it reads FPSAFLFFIETE. An intramembrane region (pore-forming) is located at residues 142–148; it reads ATIGYGY. The Selectivity filter signature appears at 143-148; sequence TIGYGY. At 149–157 the chain is on the extracellular side; that stretch reads RYITDKCPE. The helical transmembrane segment at 158–179 threads the bilayer; the sequence is GIILFLFQSILGSIVDAFLIGC. Residues 180 to 501 lie on the Cytoplasmic side of the membrane; it reads MFIKMSQPKK…LRKMNSDRFT (322 aa). The segment at 182–209 is polyphosphoinositide (PIP2)-binding; sequence IKMSQPKKRAETLMFSEHAVISMRDGKL. Phosphoserine is present on residues Ser385 and Ser424.

The protein belongs to the inward rectifier-type potassium channel (TC 1.A.2.1) family. KCNJ3 subfamily. As to quaternary structure, associates with KCNJ5/GIRK4 or KCNJ6/GIRK2 or KCNJ9/GIRK3 to form a G-protein activated heteromultimer pore-forming unit. The resulting inward current is much larger.

The protein resides in the membrane. The catalysed reaction is K(+)(in) = K(+)(out). Its activity is regulated as follows. Heteromultimer composed of KCNJ3/GIRK1 and KCNJ5/GIRK4 is activated by phosphatidylinositol 4,5 biphosphate (PtdIns(4,5)P2). Functionally, inward rectifier potassium channels are characterized by a greater tendency to allow potassium to flow into the cell rather than out of it. Their voltage dependence is regulated by the concentration of extracellular potassium; as external potassium is raised, the voltage range of the channel opening shifts to more positive voltages. The inward rectification is mainly due to the blockage of outward current by internal magnesium. This potassium channel is controlled by G proteins. This receptor plays a crucial role in regulating the heartbeat. This Bos taurus (Bovine) protein is G protein-activated inward rectifier potassium channel 1 (KCNJ3).